Reading from the N-terminus, the 1216-residue chain is Metabotropic glycine receptor (1216 aa).

Positions 1 to 23 (MGVMAYPFLFCLLLVHFGLGAIG) are cleaved as a signal peptide. Over 24–417 (ASREAPSRPD…CFVQEDKYLR (394 aa)) the chain is Extracellular. The tract at residues 25–65 (SREAPSRPDPPRERTLRAKQHAQQPARASASDPSAPWSRST) is disordered. Over residues 28-40 (APSRPDPPRERTL) the composition is skewed to basic and acidic residues. Residues 46-64 (AQQPARASASDPSAPWSRS) are compositionally biased toward low complexity. A cache-like region region spans residues 85 to 281 (YLYTGDSHKL…CENGSYKPGW (197 aa)). Residues asparagine 98 and asparagine 143 are each glycosylated (N-linked (GlcNAc...) asparagine). A disulfide bond links cysteine 99 and cysteine 272. Positions 172 and 173 each coordinate glycine. N-linked (GlcNAc...) asparagine glycosylation is present at asparagine 215. Position 271 (glutamate 271) interacts with glycine. Asparagine 274 is a glycosylation site (N-linked (GlcNAc...) asparagine). Aspartate 307 is a binding site for glycine. Residue asparagine 333 is glycosylated (N-linked (GlcNAc...) asparagine). A helical membrane pass occupies residues 418-439 (LAIISFQALCMLLDFLSMLVVY). Topologically, residues 440–451 (RFRKAKSIRASG) are cytoplasmic. The chain crosses the membrane as a helical span at residues 452 to 474 (LILLETILFGSLLLYFPVVILYF). The Extracellular portion of the chain corresponds to 475 to 478 (EPST). The chain crosses the membrane as a helical span at residues 479 to 501 (FRCILLRWVRLLGFATVYGTVTL). The cysteines at positions 481 and 573 are disulfide-linked. The Cytoplasmic portion of the chain corresponds to 502–525 (KLHRVLKVFLSRTAQRIPYMTGGR). A helical transmembrane segment spans residues 526 to 547 (VMRMLAVILLVVFWFLVGWTSS). The Extracellular segment spans residues 548–576 (VCQNLERHISLIGQGRTSDHLIFSMCLVE). A helical membrane pass occupies residues 577–597 (RWDYMTAAAEFLFLLWGVYLC). Residues 598–611 (YAVRTVPSAFHEPR) lie on the Cytoplasmic side of the membrane. A helical transmembrane segment spans residues 612–633 (YMAVAVHNELIISAIFHTIRFV). Residues 634–642 (LASRLQSDW) are Extracellular-facing. Residues 643 to 664 (MLMLYFAHTHLTVTVTIGLLLI) traverse the membrane as a helical segment. The Cytoplasmic portion of the chain corresponds to 665 to 1216 (PKFSHSSNNP…NEEVRLARKV (552 aa)). A phosphoserine mark is found at serine 694, serine 705, and serine 708. Disordered stretches follow at residues 757–875 (RITE…ESVP) and 911–1000 (KEKT…HMKD). Over residues 769-781 (CSKEDKDGGEHGS) the composition is skewed to basic and acidic residues. Residue lysine 774 forms a Glycyl lysine isopeptide (Lys-Gly) (interchain with G-Cter in ubiquitin) linkage. Positions 864–873 (EDSQAVSTES) are enriched in polar residues. Phosphoserine is present on serine 866. A compositionally biased stretch (basic and acidic residues) spans 926 to 944 (VEERAKAQKALPRERETNR). Polar residues-rich tracts occupy residues 945–963 (KYSNSDNAETQDSAPPNSS) and 980–991 (QRANPTTANSDL). Residue serine 947 is modified to Phosphoserine. The short motif at 1007-1011 (VCPWE) is the VCPWE motif 1 element. The disordered stretch occupies residues 1038–1072 (ERNPTFSLKEKSHPKPKAADLCQQSNPKSVDKAEV). Position 1066 is a phosphoserine (serine 1066). The VCPWE motif 2 signature appears at 1072-1076 (VCPWE). Serine 1081 carries the phosphoserine modification. Positions 1128–1167 (SKVENENLNQLGEQEKKTSSSERNVPDSHNSSNNFQPPLM) are disordered. Over residues 1140–1153 (EQEKKTSSSERNVP) the composition is skewed to basic and acidic residues. Residues 1154-1163 (DSHNSSNNFQ) show a composition bias toward polar residues. A VCPWE motif 3 motif is present at residues 1172–1176 (VCPWE).

The protein belongs to the G-protein coupled receptor 3 family. As to quaternary structure, homodimer. Associates with the RGS7-GNB5 complex, promoting its localization to the cell membrane and regulating its GTPase activator activity. Interacts (via VCPWE motifs) with GNAO1. Interacts with GPC4. Interacts with EGFLAM.

It is found in the cell membrane. The protein resides in the postsynaptic cell membrane. Its subcellular location is the presynaptic cell membrane. It localises to the nucleus. Metabotropic receptor for glycine that controls synapse formation and function in the brain. Acts as an atypical G-protein coupled receptor that recruits and regulates the RGS7-GNB5 complex instead of activating G proteins. In absence of glycine ligand, promotes the GTPase activator activity of RGS7, increasing the GTPase activity of G protein alpha subunits, thereby driving them into their inactive GDP-bound form. Glycine-binding changes the conformation of the intracellular surface, inhibiting the GTPase activator activity of the RGS7-GNB5 complex, promoting G protein alpha subunits into their active GTP-bound form and regulating cAMP levels. Also able to bind taurine, a compound closely related to glycine, but with a two-fold lower affinity. Glycine receptor-dependent regulation of cAMP controls key ion channels, kinases and neurotrophic factors involved in neuronal excitability and synaptic transmission. Plays a pivotal role in regulating mood and cognition via its ability to regulate neuronal excitability in L2/L3 pyramidal neurons of the prefrontal cortex. Also involved in spatial learning by regulating hippocampal CA1 neuronal excitability. Acts as a synaptic organizer in the hippocampus, required for proper mossy fiber-CA3 neurocircuitry establishment, structure and function: induces presynaptic differentiation in contacting axons via its interaction with GPC4. In addition to glycine, may also act as a receptor for osteocalcin (BGLAP) hormone: osteocalcin-binding initiates a signaling response that prevents neuronal apoptosis in the hippocampus and regulates the synthesis of neurotransmitters. In Bos taurus (Bovine), this protein is Metabotropic glycine receptor (GPR158).